The sequence spans 289 residues: Phosphoribulokinase (289 aa).

Residue 12-20 coordinates ATP; the sequence is GSSGAGTTT.

This sequence belongs to the phosphoribulokinase family.

It catalyses the reaction D-ribulose 5-phosphate + ATP = D-ribulose 1,5-bisphosphate + ADP + H(+). It functions in the pathway carbohydrate biosynthesis; Calvin cycle. This Sinorhizobium medicae (strain WSM419) (Ensifer medicae) protein is Phosphoribulokinase (cbbP).